A 303-amino-acid chain; its full sequence is UDP-3-O-acyl-N-acetylglucosamine deacetylase (303 aa).

Residues histidine 77, histidine 236, and aspartate 240 each contribute to the Zn(2+) site. Histidine 263 serves as the catalytic Proton donor.

It belongs to the LpxC family. Requires Zn(2+) as cofactor.

The catalysed reaction is a UDP-3-O-[(3R)-3-hydroxyacyl]-N-acetyl-alpha-D-glucosamine + H2O = a UDP-3-O-[(3R)-3-hydroxyacyl]-alpha-D-glucosamine + acetate. Its pathway is glycolipid biosynthesis; lipid IV(A) biosynthesis; lipid IV(A) from (3R)-3-hydroxytetradecanoyl-[acyl-carrier-protein] and UDP-N-acetyl-alpha-D-glucosamine: step 2/6. Its function is as follows. Catalyzes the hydrolysis of UDP-3-O-myristoyl-N-acetylglucosamine to form UDP-3-O-myristoylglucosamine and acetate, the committed step in lipid A biosynthesis. In Ruthia magnifica subsp. Calyptogena magnifica, this protein is UDP-3-O-acyl-N-acetylglucosamine deacetylase.